The chain runs to 363 residues: sn-glycerol-3-phosphate import ATP-binding protein UgpC (363 aa).

The 232-residue stretch at 4–235 folds into the ABC transporter domain; it reads VVLRNVRKTY…PATTFVASFI (232 aa). An ATP-binding site is contributed by 37–44; it reads GPSGCGKS.

This sequence belongs to the ABC transporter superfamily. sn-glycerol-3-phosphate importer (TC 3.A.1.1.3) family. The complex is composed of two ATP-binding proteins (UgpC), two transmembrane proteins (UgpA and UgpE) and a solute-binding protein (UgpB).

It is found in the cell inner membrane. The enzyme catalyses sn-glycerol 3-phosphate(out) + ATP + H2O = sn-glycerol 3-phosphate(in) + ADP + phosphate + H(+). Functionally, part of the ABC transporter complex UgpBAEC involved in sn-glycerol-3-phosphate (G3P) import. Responsible for energy coupling to the transport system. The chain is sn-glycerol-3-phosphate import ATP-binding protein UgpC from Rhodopseudomonas palustris (strain ATCC BAA-98 / CGA009).